The primary structure comprises 1181 residues: C5a peptidase (1181 aa).

A signal peptide spans Met1–Ala31. Residues Thr33–Ala52 are compositionally biased toward polar residues. A disordered region spans residues Thr33–Lys117. Acidic residues predominate over residues Asp70–Asn81. One can recognise a Peptidase S8 domain in the interval Lys99–Ser581. Active-site charge relay system residues include Asp130, His193, and Ser512. 4 stretches are compositionally biased toward basic and acidic residues: residues Glu1029–Gln1054, Pro1061–Gln1071, Pro1078–Gln1088, and Pro1095–Ser1107. Residues Glu1029–Lys1150 form a disordered region. A run of 5 repeats spans residues Lys1034–Thr1050, Lys1051–Thr1067, Lys1068–Thr1084, Lys1085–Thr1101, and Lys1102–Lys1118. Residues Lys1034 to Lys1118 form a 5 X 17 AA tandem repeats region. Composition is skewed to polar residues over residues Gly1109–Arg1123 and Lys1137–Thr1147. Residues Leu1144 to Asn1148 carry the LPXTG sorting signal motif. Position 1147 is a pentaglycyl murein peptidoglycan amidated threonine (Thr1147). The propeptide at Asn1148–Asp1181 is removed by sortase.

Belongs to the peptidase S8 family. Post-translationally, cleaved by SpeB protease; leading to its degradation. Degradation by SpeB is probably strictly regulated to preserve integrity of C5a peptidase.

The protein localises to the secreted. The protein resides in the cell wall. The enzyme catalyses The primary cleavage site is at 67-His-|-Lys-68 in human C5a with a minor secondary cleavage site at 58-Ala-|-Ser-59.. In terms of biological role, this virulence factor of S.pyogenes specifically cleaves the human serum chemotaxin C5a at '68-Lys-|-Asp-69' bond near its C-terminus, destroying its ability to serve as a chemoattractant. This Streptococcus pyogenes serotype M1 protein is C5a peptidase (scpA).